A 247-amino-acid chain; its full sequence is MADS-box protein defh21 (247 aa).

An MADS-box domain is found at 1–61 (MGRGKIEVKR…GKLTEYCTPP (61 aa)). Residues 91-183 (NDQVIKELTR…WLMSNQIQRQ (93 aa)) enclose the K-box domain.

Expressed exclusively in a few inner cell layers of the inner integuments of the ovules.

Its subcellular location is the nucleus. Its function is as follows. Probable transcription factor. The polypeptide is MADS-box protein defh21 (DEFH21) (Antirrhinum majus (Garden snapdragon)).